A 163-amino-acid chain; its full sequence is ATP synthase subunit b' (163 aa).

The helical transmembrane segment at leucine 28–tyrosine 45 threads the bilayer.

The protein belongs to the ATPase B chain family. F-type ATPases have 2 components, F(1) - the catalytic core - and F(0) - the membrane proton channel. F(1) has five subunits: alpha(3), beta(3), gamma(1), delta(1), epsilon(1). F(0) has four main subunits: a(1), b(1), b'(1) and c(10-14). The alpha and beta chains form an alternating ring which encloses part of the gamma chain. F(1) is attached to F(0) by a central stalk formed by the gamma and epsilon chains, while a peripheral stalk is formed by the delta, b and b' chains.

It is found in the cellular thylakoid membrane. In terms of biological role, f(1)F(0) ATP synthase produces ATP from ADP in the presence of a proton or sodium gradient. F-type ATPases consist of two structural domains, F(1) containing the extramembraneous catalytic core and F(0) containing the membrane proton channel, linked together by a central stalk and a peripheral stalk. During catalysis, ATP synthesis in the catalytic domain of F(1) is coupled via a rotary mechanism of the central stalk subunits to proton translocation. Its function is as follows. Component of the F(0) channel, it forms part of the peripheral stalk, linking F(1) to F(0). The b'-subunit is a diverged and duplicated form of b found in plants and photosynthetic bacteria. The protein is ATP synthase subunit b' of Nostoc sp. (strain PCC 7120 / SAG 25.82 / UTEX 2576).